The primary structure comprises 239 residues: Ribosomal RNA small subunit methyltransferase G (239 aa).

S-adenosyl-L-methionine-binding positions include Gly-77, Phe-82, Ala-128–Glu-129, and Arg-147. Positions Arg-219–Lys-239 are disordered.

The protein belongs to the methyltransferase superfamily. RNA methyltransferase RsmG family.

The protein resides in the cytoplasm. Specifically methylates the N7 position of guanine in position 535 of 16S rRNA. This Bacillus cytotoxicus (strain DSM 22905 / CIP 110041 / 391-98 / NVH 391-98) protein is Ribosomal RNA small subunit methyltransferase G.